The chain runs to 191 residues: Holliday junction branch migration complex subunit RuvA (191 aa).

A domain I region spans residues 1–64; it reads MIGSITGNVE…DNITQLYGFL (64 aa). Positions 65–142 are domain II; sequence NRQEQDYLKM…KMPIEETFSI (78 aa). Positions 143–146 are flexible linker; sequence IEND. Residues 146 to 191 form a domain III region; sequence DDSLAALISLGYEKLKAFNVIQEIKSKTPDASTQEVIRKALQKLSQ.

Belongs to the RuvA family. As to quaternary structure, homotetramer. Forms an RuvA(8)-RuvB(12)-Holliday junction (HJ) complex. HJ DNA is sandwiched between 2 RuvA tetramers; dsDNA enters through RuvA and exits via RuvB. An RuvB hexamer assembles on each DNA strand where it exits the tetramer. Each RuvB hexamer is contacted by two RuvA subunits (via domain III) on 2 adjacent RuvB subunits; this complex drives branch migration. In the full resolvosome a probable DNA-RuvA(4)-RuvB(12)-RuvC(2) complex forms which resolves the HJ.

Its subcellular location is the cytoplasm. Its function is as follows. The RuvA-RuvB-RuvC complex processes Holliday junction (HJ) DNA during genetic recombination and DNA repair, while the RuvA-RuvB complex plays an important role in the rescue of blocked DNA replication forks via replication fork reversal (RFR). RuvA specifically binds to HJ cruciform DNA, conferring on it an open structure. The RuvB hexamer acts as an ATP-dependent pump, pulling dsDNA into and through the RuvAB complex. HJ branch migration allows RuvC to scan DNA until it finds its consensus sequence, where it cleaves and resolves the cruciform DNA. This chain is Holliday junction branch migration complex subunit RuvA, found in Ehrlichia ruminantium (strain Welgevonden).